We begin with the raw amino-acid sequence, 251 residues long: Regulator of G-protein signaling 7-binding protein B (251 aa).

The disordered stretch occupies residues 1–43; it reads MCSAPNGRKNRPRSAANIFQIGKSSVRDPERRESTESARRAQR. Positions 25–43 are enriched in basic and acidic residues; that stretch reads SVRDPERRESTESARRAQR. 2 S-palmitoyl cysteine lipidation sites follow: C246 and C247.

This sequence belongs to the RGS7BP/RGS9BP family. In terms of processing, palmitoylated. Undergoes rapid palmitoylation turnover. Palmitoylation regulates the cell membrane and nuclear shuttling and the regulation of GPCR signaling. Upon depalmitoylation, it is targeted from the plasma membrane into the nucleus. GPCR signaling inhibits depalmitoylation and promotes localization to the plasma membrane.

The protein localises to the nucleus. It localises to the cytoplasm. It is found in the cell membrane. In terms of biological role, regulator of G protein-coupled receptor (GPCR) signaling. Regulatory subunit of the R7-Gbeta5 complexes that acts by controlling the subcellular location of the R7-Gbeta5 complexes. When palmitoylated, it targets the R7-Gbeta5 complexes to the plasma membrane, leading to inhibit G protein alpha subunits. When it is unpalmitoylated, the R7-Gbeta5 complexes undergo a nuclear/cytoplasmic shuttling. In Danio rerio (Zebrafish), this protein is Regulator of G-protein signaling 7-binding protein B (rgs7bpb).